The primary structure comprises 663 residues: Bifunctional polymyxin resistance protein ArnA (663 aa).

A formyltransferase ArnAFT region spans residues 1 to 304 (MKAVVFAYHD…ELGLVAGMRL (304 aa)). His-104 functions as the Proton donor; for formyltransferase activity in the catalytic mechanism. Residues Arg-114 and 136-140 (TMRPD) contribute to the (6R)-10-formyltetrahydrofolate site. The interval 316–663 (RLTRVLILGV…GAVSTGVEHD (348 aa)) is dehydrogenase ArnADH. Residues Asp-349 and 370 to 371 (DI) each bind NAD(+). UDP-alpha-D-glucuronate is bound by residues Ala-395, Tyr-400, and 434–435 (TS). Residue Glu-436 is the Proton acceptor; for decarboxylase activity of the active site. Residues Arg-462, Asn-494, 528–537 (QLVDGGAQKR), and Tyr-615 each bind UDP-alpha-D-glucuronate. The Proton donor; for decarboxylase activity role is filled by Arg-621.

This sequence in the N-terminal section; belongs to the Fmt family. UDP-L-Ara4N formyltransferase subfamily. In the C-terminal section; belongs to the NAD(P)-dependent epimerase/dehydratase family. UDP-glucuronic acid decarboxylase subfamily. As to quaternary structure, homohexamer, formed by a dimer of trimers.

It catalyses the reaction UDP-alpha-D-glucuronate + NAD(+) = UDP-beta-L-threo-pentopyranos-4-ulose + CO2 + NADH. It carries out the reaction UDP-4-amino-4-deoxy-beta-L-arabinose + (6R)-10-formyltetrahydrofolate = UDP-4-deoxy-4-formamido-beta-L-arabinose + (6S)-5,6,7,8-tetrahydrofolate + H(+). The protein operates within nucleotide-sugar biosynthesis; UDP-4-deoxy-4-formamido-beta-L-arabinose biosynthesis; UDP-4-deoxy-4-formamido-beta-L-arabinose from UDP-alpha-D-glucuronate: step 1/3. Its pathway is nucleotide-sugar biosynthesis; UDP-4-deoxy-4-formamido-beta-L-arabinose biosynthesis; UDP-4-deoxy-4-formamido-beta-L-arabinose from UDP-alpha-D-glucuronate: step 3/3. It functions in the pathway bacterial outer membrane biogenesis; lipopolysaccharide biosynthesis. Its function is as follows. Bifunctional enzyme that catalyzes the oxidative decarboxylation of UDP-glucuronic acid (UDP-GlcUA) to UDP-4-keto-arabinose (UDP-Ara4O) and the addition of a formyl group to UDP-4-amino-4-deoxy-L-arabinose (UDP-L-Ara4N) to form UDP-L-4-formamido-arabinose (UDP-L-Ara4FN). The modified arabinose is attached to lipid A and is required for resistance to polymyxin and cationic antimicrobial peptides. The chain is Bifunctional polymyxin resistance protein ArnA from Aeromonas salmonicida (strain A449).